Consider the following 413-residue polypeptide: Divalent metal cation transporter MntH (413 aa).

The next 11 helical transmembrane spans lie at 19–39 (FALM…GNFA), 49–69 (GYQL…IQLM), 94–114 (VWFY…AEFI), 122–142 (LVFG…TFLI), 155–175 (LVIG…LFFS), 196–216 (AVLL…IYLH), 240–260 (VAIA…TAAA), 287–307 (AAAL…TVVG), 323–343 (IPLL…ILAG), 349–369 (ILVM…IPLL), and 393–413 (LIVV…ALNL).

This sequence belongs to the NRAMP family.

The protein resides in the cell inner membrane. In terms of biological role, h(+)-stimulated, divalent metal cation uptake system. The sequence is that of Divalent metal cation transporter MntH from Erwinia tasmaniensis (strain DSM 17950 / CFBP 7177 / CIP 109463 / NCPPB 4357 / Et1/99).